The following is a 422-amino-acid chain: Ena/VASP-like protein (422 aa).

In terms of domain architecture, WH1 spans 4-118 (FEEFSEQSIC…NAMLFALNIM (115 aa)). Residues 120–135 (SQEGGPSSQRQVQNGP) are compositionally biased toward polar residues. Disordered regions lie at residues 120–139 (SQEG…SPDE) and 147–375 (VMEQ…PAGS). S136 is modified (phosphoserine). A compositionally biased stretch (basic and acidic residues) spans 147–163 (VMEQHQQQRQESLERRT). A compositionally biased stretch (low complexity) spans 175 to 186 (PSSAASAPVSCS). Pro residues predominate over residues 187 to 212 (GPPPPPPPPVPPPPTGATPPPPPPLP). The segment at 228-248 (GLAAAIAGAKLRRVQRPEDAS) is EVH2 block A. The tract at residues 228–419 (GLAAAIAGAK…DAIRQELSGI (192 aa)) is EVH2. A KLKR motif is present at residues 237–240 (KLRR). The segment covering 248-259 (SGGSSPSGTSKS) has biased composition (low complexity). A phosphoserine mark is found at S252 and S265. Positions 271 to 288 (GGLMEEMNKLLAKRRKAA) are EVH2 block B. Positions 305–326 (EDPSTSPSPGTRAASQPPNSSE) are enriched in polar residues. Phosphoserine is present on residues S310, S312, S335, S337, S347, S355, S360, and S375. A compositionally biased stretch (basic and acidic residues) spans 327-337 (AGRKPWERSNS). Residues 348-368 (RTPSVAKSPEAKSPLQSQPHS) are required for interaction with ZDHHC17. The tract at residues 385 to 419 (DLDRMKQEILEEVVRELHKVKDEIIDAIRQELSGI) is EVH2 block C. Positions 388 to 414 (RMKQEILEEVVRELHKVKDEIIDAIRQ) form a coiled coil.

It belongs to the Ena/VASP family. Homotetramer. Binds to the SH3 domains of ABL1, LYN and SRC. Also binds to profilin, with preference for isoform IIa of PFN2, and the WW domain of APBB1/FE65. Binds to SEMA6A. Interacts, via the Pro-rich region, with the C-terminal SH3 domain of DNMBP. Interacts with RAPH1. Binds, via the EVH1 domain, the Pro-rich domain of Listeria monocytogenes actA. Binds, via the EVH1 domain, the Pro-rich domain of ZYX. Interacts with FYB1. Interacts with ZDHHC17. In terms of processing, phosphorylated by PKA; phosphorylation abolishes binding to SH3 domains of ABL and SRC.

Its subcellular location is the cytoplasm. It localises to the cytoskeleton. The protein localises to the stress fiber. The protein resides in the cell projection. It is found in the lamellipodium. In terms of biological role, ena/VASP proteins are actin-associated proteins involved in a range of processes dependent on cytoskeleton remodeling and cell polarity such as axon guidance and lamellipodial and filopodial dynamics in migrating cells. EVL enhances actin nucleation and polymerization. This Pongo abelii (Sumatran orangutan) protein is Ena/VASP-like protein (EVL).